The following is a 234-amino-acid chain: Toxic shock syndrome toxin-1 (234 aa).

Positions methionine 1–alanine 40 are cleaved as a signal peptide.

It belongs to the staphylococcal/streptococcal toxin family.

It is found in the secreted. Responsible for the symptoms of toxic shock syndrome. The chain is Toxic shock syndrome toxin-1 (tst) from Staphylococcus aureus.